The chain runs to 427 residues: 5-hydroxybenzimidazole synthase BzaB (427 aa).

The protein belongs to the ThiC family. 5-hydroxybenzimidazole synthase subfamily. It depends on [4Fe-4S] cluster as a cofactor.

It catalyses the reaction 5-amino-1-(5-phospho-beta-D-ribosyl)imidazole + AH2 + S-adenosyl-L-methionine = 5-hydroxybenzimidazole + 5'-deoxyadenosine + formate + L-methionine + A + NH4(+) + phosphate + 2 H(+). It participates in cofactor biosynthesis; adenosylcobalamin biosynthesis. Its function is as follows. Together with BzaA, catalyzes the conversion of aminoimidazole ribotide (AIR) to 5-hydroxybenzimidazole (5-HBI) in a radical S-adenosyl-L-methionine (SAM)-dependent reaction. Is thus involved in the anaerobic biosynthesis of dimethylbenzimidazole (DMB), the lower axial ligand of vitamin B12 (cobalamin). Requires BzaA for catalytic activity, as BzaB alone displays no activity. In Eubacterium limosum, this protein is 5-hydroxybenzimidazole synthase BzaB.